The following is a 63-amino-acid chain: Chymotrypsin/elastase isoinhibitor 1 (63 aa).

5 disulfide bridges follow: C5/C38, C14/C33, C17/C29, C21/C60, and C40/C54. The TIL domain occupies 5-60 (CGPNEVWTECTGCEMKCGPDENTPCPLMCRRPSCECSPGRGMRRTNDGKCIPASQC).

The protein belongs to the serine protease inhibitor-like (TIL domain-containing) family.

It localises to the secreted. In terms of biological role, defends the organism against the host's proteinases. The polypeptide is Chymotrypsin/elastase isoinhibitor 1 (Ascaris suum (Pig roundworm)).